Reading from the N-terminus, the 599-residue chain is Elongation factor 4 (599 aa).

In terms of domain architecture, tr-type G spans 4–186 (ENIRNFSIIA…EIVKKIPPPE (183 aa)). Residues 16 to 21 (DHGKST) and 133 to 136 (NKID) contribute to the GTP site.

Belongs to the TRAFAC class translation factor GTPase superfamily. Classic translation factor GTPase family. LepA subfamily.

The protein localises to the cell inner membrane. The enzyme catalyses GTP + H2O = GDP + phosphate + H(+). In terms of biological role, required for accurate and efficient protein synthesis under certain stress conditions. May act as a fidelity factor of the translation reaction, by catalyzing a one-codon backward translocation of tRNAs on improperly translocated ribosomes. Back-translocation proceeds from a post-translocation (POST) complex to a pre-translocation (PRE) complex, thus giving elongation factor G a second chance to translocate the tRNAs correctly. Binds to ribosomes in a GTP-dependent manner. The protein is Elongation factor 4 of Geobacter metallireducens (strain ATCC 53774 / DSM 7210 / GS-15).